The sequence spans 134 residues: Small ribosomal subunit protein uS11 (134 aa).

The tract at residues 114-134 (SISDVTPQPHNGCRPPKRRRV) is disordered.

This sequence belongs to the universal ribosomal protein uS11 family. As to quaternary structure, part of the 30S ribosomal subunit. Interacts with proteins S7 and S18. Binds to IF-3.

Functionally, located on the platform of the 30S subunit, it bridges several disparate RNA helices of the 16S rRNA. Forms part of the Shine-Dalgarno cleft in the 70S ribosome. This chain is Small ribosomal subunit protein uS11, found in Corynebacterium efficiens (strain DSM 44549 / YS-314 / AJ 12310 / JCM 11189 / NBRC 100395).